The chain runs to 230 residues: Phosphatidylserine decarboxylase proenzyme (230 aa).

Residue serine 186 is the Schiff-base intermediate with substrate; via pyruvic acid of the active site. Serine 186 carries the pyruvic acid (Ser); by autocatalysis modification.

It belongs to the phosphatidylserine decarboxylase family. PSD-A subfamily. As to quaternary structure, heterodimer of a large membrane-associated beta subunit and a small pyruvoyl-containing alpha subunit. Pyruvate serves as cofactor. Post-translationally, is synthesized initially as an inactive proenzyme. Formation of the active enzyme involves a self-maturation process in which the active site pyruvoyl group is generated from an internal serine residue via an autocatalytic post-translational modification. Two non-identical subunits are generated from the proenzyme in this reaction, and the pyruvate is formed at the N-terminus of the alpha chain, which is derived from the carboxyl end of the proenzyme. The post-translation cleavage follows an unusual pathway, termed non-hydrolytic serinolysis, in which the side chain hydroxyl group of the serine supplies its oxygen atom to form the C-terminus of the beta chain, while the remainder of the serine residue undergoes an oxidative deamination to produce ammonia and the pyruvoyl prosthetic group on the alpha chain.

It is found in the cell membrane. It carries out the reaction a 1,2-diacyl-sn-glycero-3-phospho-L-serine + H(+) = a 1,2-diacyl-sn-glycero-3-phosphoethanolamine + CO2. It participates in phospholipid metabolism; phosphatidylethanolamine biosynthesis; phosphatidylethanolamine from CDP-diacylglycerol: step 2/2. Catalyzes the formation of phosphatidylethanolamine (PtdEtn) from phosphatidylserine (PtdSer). In Wolbachia pipientis wMel, this protein is Phosphatidylserine decarboxylase proenzyme.